The primary structure comprises 680 residues: Galactose oxidase (680 aa).

The signal sequence occupies residues 1 to 24 (MKHLLTLALCFSSINAVAVTVPHK). Residues 25–41 (AVGTGIPEGSLQFLSLR) constitute a propeptide that is removed on maturation. The region spanning 42–189 (ASAPIGSAIS…SIAEINVFQA (148 aa)) is the F5/8 type C domain. A disulfide bridge links C59 with C68. Kelch repeat units follow at residues 223-268 (RVLM…HDMF), 279-321 (QIVV…TMSD), 323-372 (RVFT…LYRS), 436-490 (KILT…VLPD), and 492-544 (STFI…LLLP). The segment at residues 269–313 (CPGISMDGNGQIVVTGGNDAKKTSLYDSSSDSWIPGPDMQVARGY) is a cross-link (3'-(S-cysteinyl)-tyrosine (Cys-Tyr)). Y313 contributes to the Cu cation binding site. Residues Y536 and H537 each contribute to the Cu cation site. The active-site Proton acceptor is Y536. C556 and C559 are disulfide-bonded. A Cu cation-binding site is contributed by H622.

Monomer. The cofactor is Cu(2+). Post-translationally, galactose oxidase contains a protein-derived free radical cofactor. In the active state, Tyr-313, which is cross-linked to Cys-269 via a thioether bond, is oxidized to a radical and acts with Cu(2+) as a two-electron acceptor in the oxidation reaction. The cross-link is believed to modulate the redox potential of the tyrosyl radical, which is further stabilized by a stacking interaction with Trp-331 in the active site. The post-translational formation of the cross-link is closely linked to the propeptide cleavage event, and both are copper-dependent, autocatalytic processes. The propeptide may act as an intramolecular chaperone, facilitating thioester bond formation and copper binding by positioning of active-site residues, including copper ligands.

It localises to the secreted. The catalysed reaction is D-galactose + O2 = D-galacto-hexodialdose + H2O2. Its activity is regulated as follows. Inhibited by diethyldithiocarbamate. Functionally, catalyzes the sterospecific oxidation of primary alcohols to the corresponding aldehydes. The biologically relevant substrate of the enzyme is not known as the enzyme exhibits broad substrate specificity from small alcohols through sugars to oligo- and polysaccharides. The chain is Galactose oxidase (GAOA) from Gibberella zeae (Wheat head blight fungus).